Here is a 340-residue protein sequence, read N- to C-terminus: Ketol-acid reductoisomerase (NADP(+)) (340 aa).

A KARI N-terminal Rossmann domain is found at 3–183; it reads VSIYYDKDCD…GGGRTGIIET (181 aa). NADP(+)-binding positions include 26 to 29, lysine 49, serine 54, and 84 to 87; these read FGSQ and DEIQ. Residue histidine 109 is part of the active site. Residue glycine 135 coordinates NADP(+). In terms of domain architecture, KARI C-terminal knotted spans 184-329; that stretch reads TFKAETETDL…RELRAMMPWI (146 aa). 4 residues coordinate Mg(2+): aspartate 192, glutamate 196, glutamate 228, and glutamate 232. Serine 253 lines the substrate pocket.

The protein belongs to the ketol-acid reductoisomerase family. Mg(2+) is required as a cofactor.

It catalyses the reaction (2R)-2,3-dihydroxy-3-methylbutanoate + NADP(+) = (2S)-2-acetolactate + NADPH + H(+). It carries out the reaction (2R,3R)-2,3-dihydroxy-3-methylpentanoate + NADP(+) = (S)-2-ethyl-2-hydroxy-3-oxobutanoate + NADPH + H(+). It functions in the pathway amino-acid biosynthesis; L-isoleucine biosynthesis; L-isoleucine from 2-oxobutanoate: step 2/4. It participates in amino-acid biosynthesis; L-valine biosynthesis; L-valine from pyruvate: step 2/4. Involved in the biosynthesis of branched-chain amino acids (BCAA). Catalyzes an alkyl-migration followed by a ketol-acid reduction of (S)-2-acetolactate (S2AL) to yield (R)-2,3-dihydroxy-isovalerate. In the isomerase reaction, S2AL is rearranged via a Mg-dependent methyl migration to produce 3-hydroxy-3-methyl-2-ketobutyrate (HMKB). In the reductase reaction, this 2-ketoacid undergoes a metal-dependent reduction by NADPH to yield (R)-2,3-dihydroxy-isovalerate. This Campylobacter lari (strain RM2100 / D67 / ATCC BAA-1060) protein is Ketol-acid reductoisomerase (NADP(+)).